The sequence spans 1432 residues: Probable ATP-dependent RNA helicase spindle-E (1432 aa).

The Helicase ATP-binding domain occupies 124 to 291 (LAAINAHPVV…FTTTNSVPPV (168 aa)). 137–144 (GQTGCGKT) serves as a coordination point for ATP. The short motif at 237–240 (DEVH) is the DEAH box element. Residues 337 to 524 (KIIMVIDNME…NSVLRAKELE (188 aa)) enclose the Helicase C-terminal domain. Residues 936–999 (AGAITKGMMV…RLMPKELIQQ (64 aa)) form the Tudor domain.

Belongs to the DEAD box helicase family. DEAH subfamily.

The protein localises to the cytoplasm. It catalyses the reaction ATP + H2O = ADP + phosphate + H(+). In terms of biological role, probable ATP-binding RNA helicase which plays a central role during spermatogenesis and oogenesis by repressing transposable elements and preventing their mobilization, which is essential for the germline integrity. Acts via the piRNA metabolic process, which mediates the repression of transposable elements during meiosis by forming complexes composed of piRNAs and Piwi and govern the methylation and subsequent repression of transposons. Involved in the repression of LTR retrotransposon copia. Also involved in telomere regulation by repressing specialized telomeric retroelements HeT-A, TAHRE, and TART; Drosophila telomeres being maintained by transposition of specialized telomeric retroelements. Involved in telomeric trans-silencing, a repression mechanism by which a transposon or a transgene inserted in subtelomeric heterochromatin has the capacity to repress in trans in the female germline, a homologous transposon, or transgene located in euchromatin. Involved in the repression of testis-expressed Stellate genes by the homologous Su(Ste) repeats. Required for anteroposterior and dorsoventral axis formation during oogenesis. This is Probable ATP-dependent RNA helicase spindle-E (spn-E) from Drosophila erecta (Fruit fly).